A 309-amino-acid chain; its full sequence is Glutaminase (309 aa).

Residues Ser-65, Asn-117, Glu-162, Asn-169, Tyr-193, Tyr-245, and Val-263 each contribute to the substrate site.

The protein belongs to the glutaminase family. Homotetramer.

It catalyses the reaction L-glutamine + H2O = L-glutamate + NH4(+). In Bacillus cereus (strain ATCC 10987 / NRS 248), this protein is Glutaminase.